We begin with the raw amino-acid sequence, 206 residues long: Urease accessory protein UreG (206 aa).

GTP is bound at residue Gly-13–Thr-20.

The protein belongs to the SIMIBI class G3E GTPase family. UreG subfamily. As to quaternary structure, homodimer. UreD, UreF and UreG form a complex that acts as a GTP-hydrolysis-dependent molecular chaperone, activating the urease apoprotein by helping to assemble the nickel containing metallocenter of UreC. The UreE protein probably delivers the nickel.

The protein localises to the cytoplasm. Its function is as follows. Facilitates the functional incorporation of the urease nickel metallocenter. This process requires GTP hydrolysis, probably effectuated by UreG. The sequence is that of Urease accessory protein UreG from Haloquadratum walsbyi (strain DSM 16790 / HBSQ001).